A 337-amino-acid polypeptide reads, in one-letter code: MVVKVGINGFGRIGRIVFRNAIEHNDVEIVAVNDPFIEPHYAAYMLKYDSTHGQFKGDIKVDGNNLTVNGKTVRFHMEKDPANIPWSETGAYYVVESTGVFTTTEKAKAHLKGGAKKVVISAPSADAPMFVMGVNHETYKSDIEVLSNSSCTTNCLAPLAKVIHDKYTIIEGLMTTIHSYTATQKVVDGPSAKDWRGGRTAAQNIIPSSTGAAKAVGKVIPELNGKLTGMAMRVPTANVSVVDLTVRIEKGASYDEIKQAVKEASEGPLSGILGYTEDDIVTTDLNGDNRSSIFDAKAGISLNKNFVKLVSWYDNEWGYSRRVLDLLVYIAKIDGNA.

NAD(+) contacts are provided by residues 12-13 (RI), Asp-34, and Lys-79. D-glyceraldehyde 3-phosphate is bound by residues 150-152 (SCT), Thr-181, 210-211 (TG), and Arg-233. The active-site Nucleophile is Cys-151. An NAD(+)-binding site is contributed by Asn-315.

Belongs to the glyceraldehyde-3-phosphate dehydrogenase family. In terms of assembly, homotetramer.

The protein resides in the cytoplasm. The catalysed reaction is D-glyceraldehyde 3-phosphate + phosphate + NAD(+) = (2R)-3-phospho-glyceroyl phosphate + NADH + H(+). The protein operates within carbohydrate degradation; glycolysis; pyruvate from D-glyceraldehyde 3-phosphate: step 1/5. The protein is Glyceraldehyde-3-phosphate dehydrogenase (GPD) of Cochliobolus lunatus (Filamentous fungus).